A 199-amino-acid chain; its full sequence is Putative peroxiredoxin ycf42 (199 aa).

Positions 8 to 165 constitute a Thioredoxin domain; the sequence is LQVGQIAPDF…TLRVLQAIQY (158 aa). C53 acts as the Cysteine sulfenic acid (-SOH) intermediate in catalysis.

This sequence belongs to the peroxiredoxin family. AhpC/Prx1 subfamily. Homodimer; disulfide-linked, upon oxidation. In terms of processing, the Cys-53-SH group is the primary site of oxidation by H(2)O(2), and the oxidized Cys-53 (probably Cys-SOH) rapidly reacts with Cys-174-SH of the other subunit to form an intermolecular disulfide. This disulfide is subsequently reduced by thioredoxin.

The protein resides in the plastid. Its subcellular location is the chloroplast. It carries out the reaction a hydroperoxide + [thioredoxin]-dithiol = an alcohol + [thioredoxin]-disulfide + H2O. Functionally, thiol-specific peroxidase that catalyzes the reduction of hydrogen peroxide and organic hydroperoxides to water and alcohols, respectively. Plays a role in cell protection against oxidative stress by detoxifying peroxides. The polypeptide is Putative peroxiredoxin ycf42 (ycf42) (Porphyra purpurea (Red seaweed)).